A 209-amino-acid polypeptide reads, in one-letter code: Ribosome maturation factor RimP (209 aa).

Belongs to the RimP family.

The protein resides in the cytoplasm. Functionally, required for maturation of 30S ribosomal subunits. In Bartonella bacilliformis (strain ATCC 35685 / KC583 / Herrer 020/F12,63), this protein is Ribosome maturation factor RimP.